Consider the following 141-residue polypeptide: MRHYEIIFLVHPDQSEQVGGMVERYTKLIEEDGGKIHRLEDWGRRQLAYAINNVHKAHYVMLNVECTGKALAELEDNFRYNDAVIRNLVIRRDEAVTGQSEMLKAEENRSERRERRDRPEHSDSADGDDGDNSDVSDNADE.

Positions 97-141 (TGQSEMLKAEENRSERRERRDRPEHSDSADGDDGDNSDVSDNADE) are disordered. Basic and acidic residues predominate over residues 103–124 (LKAEENRSERRERRDRPEHSDS). The segment covering 125–141 (ADGDDGDNSDVSDNADE) has biased composition (acidic residues).

This sequence belongs to the bacterial ribosomal protein bS6 family.

Binds together with bS18 to 16S ribosomal RNA. This is Small ribosomal subunit protein bS6 from Pseudomonas syringae pv. syringae (strain B728a).